Reading from the N-terminus, the 212-residue chain is Mediator of RNA polymerase II transcription subunit 20 (212 aa).

This sequence belongs to the Mediator complex subunit 20 family. In terms of assembly, component of the Mediator complex, which is composed of MED1, MED4, MED6, MED7, MED8, MED9, MED10, MED11, MED12, MED13, MED13L, MED14, MED15, MED16, MED17, MED18, MED19, MED20, MED21, MED22, MED23, MED24, MED25, MED26, MED27, MED29, MED30, MED31, CCNC, CDK8 and CDC2L6/CDK11. The MED12, MED13, CCNC and CDK8 subunits form a distinct module termed the CDK8 module. Mediator containing the CDK8 module is less active than Mediator lacking this module in supporting transcriptional activation. Individual preparations of the Mediator complex lacking one or more distinct subunits have been variously termed ARC, CRSP, DRIP, PC2, SMCC and TRAP. Interacts with PPARG.

The protein localises to the nucleus. In terms of biological role, component of the Mediator complex, a coactivator involved in the regulated transcription of nearly all RNA polymerase II-dependent genes. Mediator functions as a bridge to convey information from gene-specific regulatory proteins to the basal RNA polymerase II transcription machinery. Mediator is recruited to promoters by direct interactions with regulatory proteins and serves as a scaffold for the assembly of a functional preinitiation complex with RNA polymerase II and the general transcription factors. The chain is Mediator of RNA polymerase II transcription subunit 20 (MED20) from Macaca fascicularis (Crab-eating macaque).